The primary structure comprises 1072 residues: Carbamoyl phosphate synthase large chain (1072 aa).

The tract at residues 1–401 (MPKRLDINTI…SLLKAVRSLE (401 aa)) is carboxyphosphate synthetic domain. Residues R129, R169, G175, G176, K208, I210, E215, G241, V242, H243, Q284, and E298 each contribute to the ATP site. Positions 133–327 (RTLMQELNEP…IAKLAAKIAV (195 aa)) constitute an ATP-grasp 1 domain. Positions 284, 298, and 300 each coordinate Mg(2+). 3 residues coordinate Mn(2+): Q284, E298, and N300. The segment at 402-546 (LGIYHLELDH…YSTYADENES (145 aa)) is oligomerization domain. Residues 547 to 929 (IVTDRKSVVV…ALYKGLVASG (383 aa)) form a carbamoyl phosphate synthetic domain region. The ATP-grasp 2 domain maps to 671–861 (EAALTKLGIP…MANVATKVIL (191 aa)). R707, R746, E752, G777, V778, H779, S780, Q820, and E832 together coordinate ATP. Mg(2+)-binding residues include Q820, E832, and N834. Residues Q820, E832, and N834 each coordinate Mn(2+). In terms of domain architecture, MGS-like spans 930-1072 (INIPTHGSVI…QTKRHEVVHA (143 aa)). An allosteric domain region spans residues 930–1072 (INIPTHGSVI…QTKRHEVVHA (143 aa)).

This sequence belongs to the CarB family. As to quaternary structure, composed of two chains; the small (or glutamine) chain promotes the hydrolysis of glutamine to ammonia, which is used by the large (or ammonia) chain to synthesize carbamoyl phosphate. Tetramer of heterodimers (alpha,beta)4. It depends on Mg(2+) as a cofactor. The cofactor is Mn(2+).

The enzyme catalyses hydrogencarbonate + L-glutamine + 2 ATP + H2O = carbamoyl phosphate + L-glutamate + 2 ADP + phosphate + 2 H(+). It carries out the reaction hydrogencarbonate + NH4(+) + 2 ATP = carbamoyl phosphate + 2 ADP + phosphate + 2 H(+). It functions in the pathway amino-acid biosynthesis; L-arginine biosynthesis; carbamoyl phosphate from bicarbonate: step 1/1. The protein operates within pyrimidine metabolism; UMP biosynthesis via de novo pathway; (S)-dihydroorotate from bicarbonate: step 1/3. Large subunit of the glutamine-dependent carbamoyl phosphate synthetase (CPSase). CPSase catalyzes the formation of carbamoyl phosphate from the ammonia moiety of glutamine, carbonate, and phosphate donated by ATP, constituting the first step of 2 biosynthetic pathways, one leading to arginine and/or urea and the other to pyrimidine nucleotides. The large subunit (synthetase) binds the substrates ammonia (free or transferred from glutamine from the small subunit), hydrogencarbonate and ATP and carries out an ATP-coupled ligase reaction, activating hydrogencarbonate by forming carboxy phosphate which reacts with ammonia to form carbamoyl phosphate. The chain is Carbamoyl phosphate synthase large chain from Bacillus thuringiensis (strain Al Hakam).